The following is an 81-amino-acid chain: Large ribosomal subunit protein uL24 (81 aa).

The protein belongs to the universal ribosomal protein uL24 family. As to quaternary structure, part of the 50S ribosomal subunit.

In terms of biological role, one of two assembly initiator proteins, it binds directly to the 5'-end of the 23S rRNA, where it nucleates assembly of the 50S subunit. One of the proteins that surrounds the polypeptide exit tunnel on the outside of the subunit. The polypeptide is Large ribosomal subunit protein uL24 (Chloroherpeton thalassium (strain ATCC 35110 / GB-78)).